Reading from the N-terminus, the 99-residue chain is UPF0125 protein BU253 (99 aa).

Belongs to the UPF0125 (RnfH) family.

In Buchnera aphidicola subsp. Acyrthosiphon pisum (strain APS) (Acyrthosiphon pisum symbiotic bacterium), this protein is UPF0125 protein BU253.